The following is a 206-amino-acid chain: Small ribosomal subunit protein uS4 (206 aa).

The interval 15–46 is disordered; sequence MGENIWGRPKSPVNKREYGPGQHGQRRKNKLS. The S4 RNA-binding domain maps to 94 to 157; the sequence is RRLDAIVYRA…RQLAIVLEAT (64 aa).

It belongs to the universal ribosomal protein uS4 family. In terms of assembly, part of the 30S ribosomal subunit. Contacts protein S5. The interaction surface between S4 and S5 is involved in control of translational fidelity.

One of the primary rRNA binding proteins, it binds directly to 16S rRNA where it nucleates assembly of the body of the 30S subunit. Functionally, with S5 and S12 plays an important role in translational accuracy. In Cereibacter sphaeroides (strain ATCC 17025 / ATH 2.4.3) (Rhodobacter sphaeroides), this protein is Small ribosomal subunit protein uS4.